The primary structure comprises 250 residues: Small ribosomal subunit protein uS3 (250 aa).

A KH type-2 domain is found at 39 to 107 (VREFLTKKLK…PAQVSINEID (69 aa)). The tract at residues 215–250 (MNPAPAEERPAKRGRGRGEGQERRGRRGDRAADKGE) is disordered. Residues 220–250 (AEERPAKRGRGRGEGQERRGRRGDRAADKGE) are compositionally biased toward basic and acidic residues.

The protein belongs to the universal ribosomal protein uS3 family. As to quaternary structure, part of the 30S ribosomal subunit. Forms a tight complex with proteins S10 and S14.

Binds the lower part of the 30S subunit head. Binds mRNA in the 70S ribosome, positioning it for translation. This Acinetobacter baumannii (strain AB307-0294) protein is Small ribosomal subunit protein uS3.